Consider the following 1040-residue polypeptide: Neprilysin-4 (1040 aa).

The disordered stretch occupies residues methionine 1 to asparagine 27. The segment at methionine 1 to arginine 45 is required for maintaining muscle integrity. Residues methionine 1–cysteine 55 are Cytoplasmic-facing. The helical; Signal-anchor for type II membrane protein transmembrane segment at lysine 56–methionine 76 threads the bilayer. The Extracellular portion of the chain corresponds to arginine 77–tryptophan 1040. A Peptidase M13 domain is found at glutamate 251 to tryptophan 1040. 4 cysteine pairs are disulfide-bonded: cysteine 277/cysteine 1025, cysteine 285/cysteine 985, cysteine 452/cysteine 700, and cysteine 909/cysteine 1037. Residues asparagine 387, asparagine 593, asparagine 723, and asparagine 819 are each glycosylated (N-linked (GlcNAc...) asparagine). A Zn(2+)-binding site is contributed by histidine 872. Glutamate 873 is a catalytic residue. Histidine 876 lines the Zn(2+) pocket. An N-linked (GlcNAc...) asparagine glycan is attached at asparagine 916. Zn(2+) is bound at residue glutamate 934. Aspartate 938 serves as the catalytic Proton donor. Asparagine 969 carries an N-linked (GlcNAc...) asparagine glycan.

Belongs to the peptidase M13 family. As to quaternary structure, interacts (via intracellular domain) with the putative carbohydrate kinase CG3534. Zn(2+) is required as a cofactor. In terms of tissue distribution, expressed in the gonads and testes of adults, and the adult and larval brain (at protein level). In embryos, expressed in the pericardial, muscle founder and glia cells (at protein level). In stage 12 embryos, expressed in specific dorsal muscle founder cells such as DA1 and DO2, and also in the certain pericardial progenitor cells where expression persists throughout embryogenesis. Expressed in the glia cells of the embryonic, larval and adult central nervous system. Expressed in the somatic muscles of larvae, pupae and adults. Isoform A: Detected in the male abdomen (at protein level). Isoform B: Not detected in the male or female abdomen (at protein level).

The protein resides in the cell membrane. It localises to the sarcoplasmic reticulum. It is found in the cytoplasm. It carries out the reaction Preferential cleavage of polypeptides between hydrophobic residues, particularly with Phe or Tyr at P1'.. Functionally, metalloendoprotease which cleaves peptides at the amino side of hydrophobic residues - such as the hormones Akh and Dh31, and the neuropeptides Allatostatins (AST1, AST2, AST3 and AST4), Crz, Drosulfakinins (DSK-I and DSK-II), Lk, sNPF and the tachykinin peptides TK-1, TK-2, TK-4 and TK-5. Functions in female fertility, memory formation and may also act in regulating insulin signaling and food intake. Likely to be involved in controlling feeding behavior and the expression of insulin-like peptides by cleaving various regulatory peptides that include certain Drosulfakinins, Allatostatins and tachykinin peptides. Required in females for normal patterns of egg laying and hatching. Required in the dorsal paired medial neurons for the proper formation of long-term (LTM) and middle-term memories (MTM). Also required in the mushroom body neurons where it functions redundantly with neprilysins Nep2 and Nep3, in normal LTM formation. Cleaves angiotensin-1 and tachykinin neuropeptide substance P. Functions in maintaining muscle integrity, possibly independently of its endopeptidase activity. This chain is Neprilysin-4, found in Drosophila melanogaster (Fruit fly).